The primary structure comprises 360 residues: DNA replication and repair protein RecF (360 aa).

30 to 37 (GHNGSGKT) is an ATP binding site.

The protein belongs to the RecF family.

It localises to the cytoplasm. Functionally, the RecF protein is involved in DNA metabolism; it is required for DNA replication and normal SOS inducibility. RecF binds preferentially to single-stranded, linear DNA. It also seems to bind ATP. This Shewanella amazonensis (strain ATCC BAA-1098 / SB2B) protein is DNA replication and repair protein RecF.